A 396-amino-acid polypeptide reads, in one-letter code: Adenosine 3'-phospho 5'-phosphosulfate transporter 2 (396 aa).

The interval 22-42 (NGGESAGNSPPSQRKSSTSES) is disordered. A compositionally biased stretch (polar residues) spans 27–42 (AGNSPPSQRKSSTSES). A phosphoserine mark is found at Ser37 and Ser40. A glycan (N-linked (GlcNAc...) asparagine) is linked at Asn57. The next 10 membrane-spanning stretches (helical) occupy residues 66 to 86 (CAGV…IFTV), 91 to 111 (PYGW…GLVE), 140 to 160 (LILA…LGYL), 163 to 183 (PTQV…SILI), 189 to 209 (GLLD…FTLA), 216 to 236 (NFNL…AAIG), 253 to 273 (VVFY…LVTG), 290 to 310 (FGYG…VLAL), 318 to 338 (IAAT…FVLF), and 342 to 362 (FTLQ…LNVY).

The protein belongs to the nucleotide-sugar transporter family. SLC35B subfamily.

It localises to the golgi apparatus membrane. Functionally, mediates the transport of adenosine 3'-phospho 5'-phosphosulfate (PAPS), from cytosol into Golgi. PAPS is a universal sulfuryl donor for sulfation events that take place in the Golgi. Essential for viability. Involved in glycosaminoglycan synthesis and the subsequent signaling. May be involved in hh and dpp signaling by controlling the sulfation of heparan sulfate (HS). The chain is Adenosine 3'-phospho 5'-phosphosulfate transporter 2 (Papst2) from Drosophila melanogaster (Fruit fly).